Consider the following 449-residue polypeptide: Asparagine--tRNA ligase (449 aa).

Belongs to the class-II aminoacyl-tRNA synthetase family. As to quaternary structure, homodimer.

The protein localises to the cytoplasm. It catalyses the reaction tRNA(Asn) + L-asparagine + ATP = L-asparaginyl-tRNA(Asn) + AMP + diphosphate + H(+). In Desulfotalea psychrophila (strain LSv54 / DSM 12343), this protein is Asparagine--tRNA ligase.